The sequence spans 307 residues: Fructose-bisphosphate aldolase (307 aa).

Residue serine 49 coordinates D-glyceraldehyde 3-phosphate. Catalysis depends on aspartate 82, which acts as the Proton donor. Residues histidine 83, aspartate 104, glutamate 134, and histidine 180 each coordinate Zn(2+). Glycine 181 serves as a coordination point for dihydroxyacetone phosphate. Histidine 210 is a binding site for Zn(2+). Residues 211 to 213 (GAS) and 253 to 256 (NTDT) each bind dihydroxyacetone phosphate.

It belongs to the class II fructose-bisphosphate aldolase family. As to quaternary structure, homodimer. The cofactor is Zn(2+).

It catalyses the reaction beta-D-fructose 1,6-bisphosphate = D-glyceraldehyde 3-phosphate + dihydroxyacetone phosphate. The protein operates within carbohydrate degradation; glycolysis; D-glyceraldehyde 3-phosphate and glycerone phosphate from D-glucose: step 4/4. Functionally, catalyzes the aldol condensation of dihydroxyacetone phosphate (DHAP or glycerone-phosphate) with glyceraldehyde 3-phosphate (G3P) to form fructose 1,6-bisphosphate (FBP) in gluconeogenesis and the reverse reaction in glycolysis. This is Fructose-bisphosphate aldolase (fba) from Helicobacter pylori (strain J99 / ATCC 700824) (Campylobacter pylori J99).